The sequence spans 441 residues: Probable dihydroorotase-like protein (441 aa).

Positions Val121–Ala140 are disordered.

It belongs to the metallo-dependent hydrolases superfamily. DHOase family. PyrC' subfamily.

In terms of biological role, non-functional DHOase. The chain is Probable dihydroorotase-like protein (pyrC') from Synechocystis sp. (strain ATCC 27184 / PCC 6803 / Kazusa).